We begin with the raw amino-acid sequence, 274 residues long: tRNA (guanine-N(1)-)-methyltransferase (274 aa).

S-adenosyl-L-methionine contacts are provided by residues G116 and 140 to 145 (LGDYVL).

It belongs to the RNA methyltransferase TrmD family. In terms of assembly, homodimer.

It is found in the cytoplasm. The catalysed reaction is guanosine(37) in tRNA + S-adenosyl-L-methionine = N(1)-methylguanosine(37) in tRNA + S-adenosyl-L-homocysteine + H(+). In terms of biological role, specifically methylates guanosine-37 in various tRNAs. The chain is tRNA (guanine-N(1)-)-methyltransferase from Arthrobacter sp. (strain FB24).